We begin with the raw amino-acid sequence, 243 residues long: Probable 6-oxopurine nucleoside phosphorylase (243 aa).

Phosphate contacts are provided by residues Thr-8 and 48 to 49 (RH). Met-174 is a binding site for substrate. Thr-175 contacts phosphate. 198-200 (NYA) contributes to the substrate binding site.

This sequence belongs to the PNP/MTAP phosphorylase family. MTAP subfamily. In terms of assembly, homohexamer. Dimer of a homotrimer.

The catalysed reaction is a purine D-ribonucleoside + phosphate = a purine nucleobase + alpha-D-ribose 1-phosphate. It participates in purine metabolism; purine nucleoside salvage. In terms of biological role, purine nucleoside phosphorylase which is highly specific for 6-oxopurine nucleosides. Cleaves guanosine or inosine to respective bases and sugar-1-phosphate molecules. Involved in purine salvage. This Archaeoglobus fulgidus (strain ATCC 49558 / DSM 4304 / JCM 9628 / NBRC 100126 / VC-16) protein is Probable 6-oxopurine nucleoside phosphorylase.